A 452-amino-acid polypeptide reads, in one-letter code: Maltoporin (452 aa).

The first 25 residues, 1-25, serve as a signal peptide directing secretion; that stretch reads MMITLRKLPLAVAVAAGVMSAQAMA.

This sequence belongs to the porin LamB (TC 1.B.3) family. As to quaternary structure, homotrimer formed of three 18-stranded antiparallel beta-barrels, containing three independent channels.

Its subcellular location is the cell outer membrane. The catalysed reaction is beta-maltose(in) = beta-maltose(out). In terms of biological role, involved in the transport of maltose and maltodextrins. In Salmonella heidelberg (strain SL476), this protein is Maltoporin.